A 113-amino-acid chain; its full sequence is MTKADIIESVYEKVGFSKKEAAEIVEMVFDTIKETLERGEKIKISGFGNFIVRDKKSRVGRNPQTGEEIEISARRVLTFRPSQVLKNALNGGVSDETEGADDDDDDEEGEGDE.

A disordered region spans residues 88–113; it reads ALNGGVSDETEGADDDDDDEEGEGDE. The segment covering 95–113 has biased composition (acidic residues); that stretch reads DETEGADDDDDDEEGEGDE.

This sequence belongs to the bacterial histone-like protein family. In terms of assembly, heterodimer of an alpha and a beta chain.

This protein is one of the two subunits of integration host factor, a specific DNA-binding protein that functions in genetic recombination as well as in transcriptional and translational control. The sequence is that of Integration host factor subunit alpha from Anaeromyxobacter dehalogenans (strain 2CP-C).